Here is a 345-residue protein sequence, read N- to C-terminus: MNSTIIAVDAMGGDFGPSVVVPGAVDAARERGLKVLLVGDRQKVEEELARIPLDGVEVEVVHASEVAGMDEKPSDILRRKKDASIQVVCRLVRDGHAHGIVSAGHSGASVACGMFIMGRVPGVERPALASVMPTEKQPIVLLDVGANVDCKPHHLFQFGLMANAFARDLLGYETPRIGLLSIGEEEGKGNTLVKEAYELFKLAQNINFVGNVEGRDLFTGEVDVVVCDGFVGNVALKLSEGLSSSMSRVLKRELLSGFLPKLGTLLARSAFKRFARVVDYAEYGGAPLLGLQSIAIVCHGKSNAKAIKSAVNMAATFVEKKTNERVVQAICANEELTRYGKAVRQ.

Belongs to the PlsX family. Homodimer. Probably interacts with PlsY.

It localises to the cytoplasm. It carries out the reaction a fatty acyl-[ACP] + phosphate = an acyl phosphate + holo-[ACP]. It participates in lipid metabolism; phospholipid metabolism. Catalyzes the reversible formation of acyl-phosphate (acyl-PO(4)) from acyl-[acyl-carrier-protein] (acyl-ACP). This enzyme utilizes acyl-ACP as fatty acyl donor, but not acyl-CoA. The chain is Phosphate acyltransferase from Nitratidesulfovibrio vulgaris (strain ATCC 29579 / DSM 644 / CCUG 34227 / NCIMB 8303 / VKM B-1760 / Hildenborough) (Desulfovibrio vulgaris).